Reading from the N-terminus, the 282-residue chain is Urease accessory protein UreD (282 aa).

It belongs to the UreD family. As to quaternary structure, ureD, UreF and UreG form a complex that acts as a GTP-hydrolysis-dependent molecular chaperone, activating the urease apoprotein by helping to assemble the nickel containing metallocenter of UreC. The UreE protein probably delivers the nickel.

It is found in the cytoplasm. Its function is as follows. Required for maturation of urease via the functional incorporation of the urease nickel metallocenter. This chain is Urease accessory protein UreD, found in Methylobacterium sp. (strain 4-46).